The following is a 146-amino-acid chain: uncharacterized protein (146 aa).

It belongs to the BlaI transcriptional regulatory family.

This is an uncharacterized protein from Latilactobacillus sakei (Lactobacillus sakei).